We begin with the raw amino-acid sequence, 424 residues long: 3-oxo-tetronate kinase (424 aa).

ATP-binding positions include Ser260, 364–367 (GGET), and Gly407.

The protein belongs to the four-carbon acid sugar kinase family.

It catalyses the reaction 3-dehydro-L-erythronate + ATP = 3-dehydro-4-O-phospho-L-erythronate + ADP + H(+). It carries out the reaction 3-dehydro-D-erythronate + ATP = 3-dehydro-4-O-phospho-D-erythronate + ADP + H(+). In terms of biological role, catalyzes the ATP-dependent phosphorylation of 3-oxo-tetronate to 3-oxo-tetronate 4-phosphate. This Pectobacterium atrosepticum (strain SCRI 1043 / ATCC BAA-672) (Erwinia carotovora subsp. atroseptica) protein is 3-oxo-tetronate kinase.